An 851-amino-acid polypeptide reads, in one-letter code: Pentatricopeptide repeat-containing protein At3g54980, mitochondrial (851 aa).

The transit peptide at 1–26 (MRSLLVFRKIPSRIRLRNLRNNKPFC) directs the protein to the mitochondrion. PPR repeat units lie at residues 162–196 (NSRAFNYLLNAYSKDRQTDHAVDIVNQMLELDVIP), 197–231 (FFPYVNRTLSALVQRNSLTEAKELYSRMVAIGVDG), 232–266 (DNVTTQLLMRASLREEKPAEALEVLSRAIERGAEP), 267–301 (DSLLYSLAVQACCKTLDLAMANSLLREMKEKKLCV), 303–337 (SQETYTSVILASVKQGNMDDAIRLKDEMLSDGISM), 338–372 (NVVAATSLITGHCKNNDLVSALVLFDKMEKEGPSP), 373–407 (NSVTFSVLIEWFRKNGEMEKALEFYKKMEVLGLTP), 408–438 (SVFHVHTIIQGWLKGQKHEEALKLFDESFET), 442–476 (NVFVCNTILSWLCKQGKTDEATELLSKMESRGIGP), 477–511 (NVVSYNNVMLGHCRQKNMDLARIVFSNILEKGLKP), 512–546 (NNYTYSILIDGCFRNHDEQNALEVVNHMTSSNIEV), 547–577 (NGVVYQTIINGLCKVGQTSKARELLANMIEE), 583–617 (SCMSYNSIIDGFFKEGEMDSAVAAYEEMCGNGISP), 618–652 (NVITYTSLMNGLCKNNRMDQALEMRDEMKNKGVKL), 653–687 (DIPAYGALIDGFCKRSNMESASALFSELLEEGLNP), 688–722 (SQPIYNSLISGFRNLGNMVAALDLYKKMLKDGLRC), 723–757 (DLGTYTTLIDGLLKDGNLILASELYTEMQAVGLVP), 758–792 (DEIIYTVIVNGLSKKGQFVKVVKMFEEMKKNNVTP), and 793–827 (NVLIYNAVIAGHYREGNLDEAFRLHDEMLDKGILP).

The protein belongs to the PPR family. P subfamily.

The protein localises to the mitochondrion. The polypeptide is Pentatricopeptide repeat-containing protein At3g54980, mitochondrial (Arabidopsis thaliana (Mouse-ear cress)).